The following is a 427-amino-acid chain: O-methyltransferase PaMT (427 aa).

Trp230 and Asp281 together coordinate S-adenosyl-L-methionine. His326 functions as the Proton acceptor in the catalytic mechanism.

The protein belongs to the class I-like SAM-binding methyltransferase superfamily. Cation-independent O-methyltransferase family. COMT subfamily. S-adenosyl-L-methionine is required as a cofactor.

Its pathway is mycotoxin biosynthesis. Its function is as follows. O-methyltransferase; part of the 2 gene clusters that mediate the biosynthesis of fusicoccins, diterpene glucosides that display phytohormone-like activity and function as potent activators of plasma membrane H(+)-ATPases in plants by modifying 14-3-3 proteins and cause the plant disease constriction canker. The first step in the pathway is performed by the fusicoccadiene synthase PaFS that possesses both prenyl transferase and terpene cyclase activity, converting isopentenyl diphosphate and dimethylallyl diphosphate into geranylgeranyl diphosphate (GGDP) and successively converting GGDP into fusicocca-2,10(14)-diene, a precursor for fusicoccin H. The second step is the oxidation at the C-8 position by the cytochrome P450 monooxygenase PaP450-2 to yield fusicocca-2,10(14)-diene-8-beta-ol. The cytochrome P450 monooxygenase PaP450-1 then catalyzes the hydroxylation at the C-16 position to produce fusicocca-2,10(14)-diene-8-beta,16-diol. The dioxygenase fc-dox then catalyzes the 16-oxydation of fusicocca-2,10(14)-diene-8-beta,16-diol to yield an aldehyde (8-beta-hydroxyfusicocca-1,10(14)-dien-16-al). The short-chain dehydrogenase/reductase fc-sdr catalyzes the reduction of the aldehyde to yield fusicocca-1,10(14)-diene-8-beta,16-diol. The next step is the hydroxylation at C-9 performed by the cytochrome P450 monooxygenase PaP450-3 that leads to fusicoccin H aglycon which is glycosylated to fusicoccin H by the O-glycosyltransferase PaGT. Hydroxylation at C-12 by the cytochrome P450 monooxygenase PaP450-4 leads then to the production of fusicoccin Q and is followed by methylation by the O-methyltransferase PaMT to yield fusicoccin P. Fusicoccin P is further converted to fusicoccin J via prenylation by the O-glucose prenyltransferase PaPT. Cytochrome P450 monooxygenase PaP450-5 then performs hydroxylation at C-19 to yield dideacetyl-fusicoccin A which is acetylated to 3'-O-deacetyl-fusicoccin A by the O-acetyltransferase PaAT-2. Finally, a another acetylation by the O-acetyltransferase PaAT-1 yields fusicoccin A. The protein is O-methyltransferase PaMT of Phomopsis amygdali (Fusicoccum amygdali).